The chain runs to 213 residues: Putative 3-methyladenine DNA glycosylase (213 aa).

Belongs to the DNA glycosylase MPG family.

In Leifsonia xyli subsp. xyli (strain CTCB07), this protein is Putative 3-methyladenine DNA glycosylase.